Consider the following 103-residue polypeptide: Small ribosomal subunit protein uS10 (103 aa).

The protein belongs to the universal ribosomal protein uS10 family. In terms of assembly, part of the 30S ribosomal subunit.

Functionally, involved in the binding of tRNA to the ribosomes. This chain is Small ribosomal subunit protein uS10, found in Neisseria gonorrhoeae (strain NCCP11945).